A 302-amino-acid polypeptide reads, in one-letter code: Glycine--tRNA ligase alpha subunit (302 aa).

The protein belongs to the class-II aminoacyl-tRNA synthetase family. As to quaternary structure, tetramer of two alpha and two beta subunits.

It is found in the cytoplasm. The enzyme catalyses tRNA(Gly) + glycine + ATP = glycyl-tRNA(Gly) + AMP + diphosphate. In Edwardsiella ictaluri (strain 93-146), this protein is Glycine--tRNA ligase alpha subunit.